The sequence spans 180 residues: Small ribosomal subunit protein uS4 (180 aa).

One can recognise an S4 RNA-binding domain in the interval 103–174 (RRLQTLVFKK…HPERMVIEEV (72 aa)).

It belongs to the universal ribosomal protein uS4 family. In terms of assembly, part of the 30S ribosomal subunit. Contacts protein S5. The interaction surface between S4 and S5 is involved in control of translational fidelity.

In terms of biological role, one of the primary rRNA binding proteins, it binds directly to 16S rRNA where it nucleates assembly of the body of the 30S subunit. With S5 and S12 plays an important role in translational accuracy. In Thermococcus sibiricus (strain DSM 12597 / MM 739), this protein is Small ribosomal subunit protein uS4.